Reading from the N-terminus, the 298-residue chain is Leucine-rich repeat-containing protein 55 (298 aa).

The first 34 residues, 1-34 (MGDTWAQLPWPGPPHSALLLVFFLLAAGVMHSDA), serve as a signal peptide directing secretion. The LRRNT domain occupies 35–65 (GASCPVLCTCRNQVVDCSNQRLFSVPPDLPM). 2 disulfide bridges follow: Cys38-Cys44 and Cys42-Cys51. LRR repeat units lie at residues 66 to 87 (DTRN…YLTC), 90 to 111 (ELRV…LFLH), 114 to 135 (RLAH…MFRE), 138 to 160 (GLVH…AFQG), and 163 to 186 (HLRD…EGLP). Residues 196–251 (NPWVCGCTMEPLLKWLRNRIQRCTADSQLAECRGPPEVEGAPLFSLTEESFKACHL) enclose the LRRCT domain. Disulfide bonds link Cys200-Cys227 and Cys202-Cys249. Residues 259–279 (LFIAFVGFVVSIASVATNFLL) form a helical membrane-spanning segment.

As to quaternary structure, interacts with KCNMA1.

It is found in the cell membrane. Functionally, auxiliary protein of the large-conductance, voltage and calcium-activated potassium channel (BK alpha). Modulates gating properties by producing a marked shift in the BK channel's voltage dependence of activation in the hyperpolarizing direction, and in the absence of calcium. The chain is Leucine-rich repeat-containing protein 55 (Lrrc55) from Rattus norvegicus (Rat).